The chain runs to 298 residues: GTP cyclohydrolase FolE2 (298 aa).

The protein belongs to the GTP cyclohydrolase IV family.

It carries out the reaction GTP + H2O = 7,8-dihydroneopterin 3'-triphosphate + formate + H(+). Its pathway is cofactor biosynthesis; 7,8-dihydroneopterin triphosphate biosynthesis; 7,8-dihydroneopterin triphosphate from GTP: step 1/1. In terms of biological role, converts GTP to 7,8-dihydroneopterin triphosphate. In Pseudomonas aeruginosa (strain LESB58), this protein is GTP cyclohydrolase FolE2.